We begin with the raw amino-acid sequence, 146 residues long: 3-hydroxyacyl-[acyl-carrier-protein] dehydratase FabZ (146 aa).

H49 is an active-site residue.

It belongs to the thioester dehydratase family. FabZ subfamily.

The protein resides in the cytoplasm. The catalysed reaction is a (3R)-hydroxyacyl-[ACP] = a (2E)-enoyl-[ACP] + H2O. Involved in unsaturated fatty acids biosynthesis. Catalyzes the dehydration of short chain beta-hydroxyacyl-ACPs and long chain saturated and unsaturated beta-hydroxyacyl-ACPs. In Pseudomonas fluorescens (strain ATCC BAA-477 / NRRL B-23932 / Pf-5), this protein is 3-hydroxyacyl-[acyl-carrier-protein] dehydratase FabZ.